The sequence spans 299 residues: ATP phosphoribosyltransferase (299 aa).

The protein belongs to the ATP phosphoribosyltransferase family. Long subfamily. Mg(2+) is required as a cofactor.

Its subcellular location is the cytoplasm. The enzyme catalyses 1-(5-phospho-beta-D-ribosyl)-ATP + diphosphate = 5-phospho-alpha-D-ribose 1-diphosphate + ATP. The protein operates within amino-acid biosynthesis; L-histidine biosynthesis; L-histidine from 5-phospho-alpha-D-ribose 1-diphosphate: step 1/9. Its activity is regulated as follows. Feedback inhibited by histidine. Its function is as follows. Catalyzes the condensation of ATP and 5-phosphoribose 1-diphosphate to form N'-(5'-phosphoribosyl)-ATP (PR-ATP). Has a crucial role in the pathway because the rate of histidine biosynthesis seems to be controlled primarily by regulation of HisG enzymatic activity. The sequence is that of ATP phosphoribosyltransferase from Mannheimia succiniciproducens (strain KCTC 0769BP / MBEL55E).